A 363-amino-acid polypeptide reads, in one-letter code: Eukaryotic translation initiation factor 3 subunit H (363 aa).

The MPN domain occupies 13–163 (VQVEALVVMK…LRAFRLSTAF (151 aa)).

This sequence belongs to the eIF-3 subunit H family. As to quaternary structure, component of the eukaryotic translation initiation factor 3 (eIF-3) complex.

The protein localises to the cytoplasm. Component of the eukaryotic translation initiation factor 3 (eIF-3) complex, which is involved in protein synthesis of a specialized repertoire of mRNAs and, together with other initiation factors, stimulates binding of mRNA and methionyl-tRNAi to the 40S ribosome. The eIF-3 complex specifically targets and initiates translation of a subset of mRNAs involved in cell proliferation. This chain is Eukaryotic translation initiation factor 3 subunit H, found in Pyricularia oryzae (strain 70-15 / ATCC MYA-4617 / FGSC 8958) (Rice blast fungus).